Here is a 419-residue protein sequence, read N- to C-terminus: Prolyl hydroxylase EGLN2 (419 aa).

Composition is skewed to low complexity over residues 1–18 (MDSPCQPQALNQALPQLP) and 64–73 (TTATATTTTA). Disordered regions lie at residues 1–89 (MDSP…GELW) and 108–181 (AAQG…REEV). A Bipartite nuclear localization signal motif is present at residues 89 to 134 (WPLQSEGAAALVTKECQRLAAQGARPEAPKRKWAKDGGDAPSPSKR). Residues 115–126 (EAPKRKWAKDGG) are compositionally biased toward basic and acidic residues. Ser130 bears the Phosphoserine mark. The span at 154–174 (SGASNSSSSSSNTTSSSGEAS) shows a compositional bias: low complexity. Residues 237-247 (VSQRAIPPRSI) form a beta(2)beta(3) 'finger-like' loop region. In terms of domain architecture, Fe2OG dioxygenase spans 290–388 (GRTKAMVACY…RYAITVWYFD (99 aa)). Residues His309, Asp311, and His370 each contribute to the Fe cation site. Residue Arg379 participates in 2-oxoglutarate binding.

Interacts with E3 ligase SIAH2. Interacts with LIMD1, WTIP and AJUBA. Requires Fe(2+) as cofactor. The cofactor is L-ascorbate. In terms of processing, ubiquitinated by SIAH1 and/or SIAH2 in response to the unfolded protein response (UPR), leading to its degradation. As to expression, highly expressed in testis, expression was also detected in the heart brain, liver kidney and lung. Expression was lowest in spleen and skeletal muscle. Constitutively expressed during differentiation of C2C12 skeletal myocytes.

It localises to the nucleus. The catalysed reaction is L-prolyl-[protein] + 2-oxoglutarate + O2 = trans-4-hydroxy-L-prolyl-[protein] + succinate + CO2. The enzyme catalyses L-prolyl-[hypoxia-inducible factor alpha subunit] + 2-oxoglutarate + O2 = trans-4-hydroxy-L-prolyl-[hypoxia-inducible factor alpha subunit] + succinate + CO2. In terms of biological role, prolyl hydroxylase that mediates hydroxylation of proline residues in target proteins, such as ATF4, IKBKB, CEP192 and HIF1A. Target proteins are preferentially recognized via a LXXLAP motif. Cellular oxygen sensor that catalyzes, under normoxic conditions, the post-translational formation of 4-hydroxyproline in hypoxia-inducible factor (HIF) alpha proteins. Hydroxylates a specific proline found in each of the oxygen-dependent degradation (ODD) domains (N-terminal, NODD, and C-terminal, CODD) of HIF1A. Also hydroxylates HIF2A. Has a preference for the CODD site for both HIF1A and HIF2A. Hydroxylated HIFs are then targeted for proteasomal degradation via the von Hippel-Lindau ubiquitination complex. Under hypoxic conditions, the hydroxylation reaction is attenuated allowing HIFs to escape degradation resulting in their translocation to the nucleus, heterodimerization with HIF1B, and increased expression of hypoxy-inducible genes. EGLN2 is involved in regulating hypoxia tolerance and apoptosis in cardiac and skeletal muscle. Also regulates susceptibility to normoxic oxidative neuronal death. Links oxygen sensing to cell cycle and primary cilia formation by hydroxylating the critical centrosome component CEP192 which promotes its ubiquitination and subsequent proteasomal degradation. Hydroxylates IKBKB, mediating NF-kappa-B activation in hypoxic conditions. Also mediates hydroxylation of ATF4, leading to decreased protein stability of ATF4. The protein is Prolyl hydroxylase EGLN2 of Mus musculus (Mouse).